The primary structure comprises 356 residues: Protein-arginine kinase (356 aa).

Residues 24 to 254 form the Phosphagen kinase C-terminal domain; the sequence is IVLSTRIRLA…HQLIQQEKAA (231 aa). Residues 27-31, His-92, Arg-125, 176-180, and 207-212 contribute to the ATP site; these read STRIR, RASVM, and RGIYGE. Residues 337–342 carry the RDXXRA motif of the pArg binding pocket involved in allosteric regulation motif; the sequence is RDYRRA.

The protein belongs to the ATP:guanido phosphotransferase family.

The catalysed reaction is L-arginyl-[protein] + ATP = N(omega)-phospho-L-arginyl-[protein] + ADP + H(+). Its activity is regulated as follows. Appears to be allosterically activated by the binding of pArg-containing polypeptides to the pArg-binding pocket localized in the C-terminal domain of McsB. Functionally, catalyzes the specific phosphorylation of arginine residues in a large number of proteins. Is part of the bacterial stress response system. Protein arginine phosphorylation has a physiologically important role and is involved in the regulation of many critical cellular processes, such as protein homeostasis, motility, competence, and stringent and stress responses, by regulating gene expression and protein activity. The polypeptide is Protein-arginine kinase (Bacillus cytotoxicus (strain DSM 22905 / CIP 110041 / 391-98 / NVH 391-98)).